Reading from the N-terminus, the 133-residue chain is Ribosome-binding factor A (133 aa).

It belongs to the RbfA family. As to quaternary structure, monomer. Binds 30S ribosomal subunits, but not 50S ribosomal subunits or 70S ribosomes.

It is found in the cytoplasm. One of several proteins that assist in the late maturation steps of the functional core of the 30S ribosomal subunit. Associates with free 30S ribosomal subunits (but not with 30S subunits that are part of 70S ribosomes or polysomes). Required for efficient processing of 16S rRNA. May interact with the 5'-terminal helix region of 16S rRNA. This Salmonella heidelberg (strain SL476) protein is Ribosome-binding factor A.